A 72-amino-acid chain; its full sequence is Translation initiation factor IF-1 (72 aa).

Residues 1-72 (MAKDDVIEVE…TRGRITYRYK (72 aa)) enclose the S1-like domain. Tyr60 is subject to Phosphotyrosine.

This sequence belongs to the IF-1 family. As to quaternary structure, component of the 30S ribosomal translation pre-initiation complex which assembles on the 30S ribosome in the order IF-2 and IF-3, IF-1 and N-formylmethionyl-tRNA(fMet); mRNA recruitment can occur at any time during PIC assembly.

The protein resides in the cytoplasm. Functionally, one of the essential components for the initiation of protein synthesis. Stabilizes the binding of IF-2 and IF-3 on the 30S subunit to which N-formylmethionyl-tRNA(fMet) subsequently binds. Helps modulate mRNA selection, yielding the 30S pre-initiation complex (PIC). Upon addition of the 50S ribosomal subunit IF-1, IF-2 and IF-3 are released leaving the mature 70S translation initiation complex. In Bacillus pumilus (strain SAFR-032), this protein is Translation initiation factor IF-1.